The primary structure comprises 722 residues: Pre-B-cell leukemia transcription factor-interacting protein 1 (722 aa).

Polar residues predominate over residues 1 to 10 (MASCPDSDNS). A disordered region spans residues 1–180 (MASCPDSDNS…TAAVDGEDQA (180 aa)). The span at 88-97 (DDGHGTKRPG) shows a compositional bias: basic and acidic residues. Ser133, Ser144, Ser145, and Ser146 each carry phosphoserine. Thr150 carries the phosphothreonine modification. Phosphoserine is present on Ser166. Coiled coils occupy residues 266 to 346 (LLLD…RGVD) and 373 to 401 (DTSLLEQHKQLEAEAKALRQELQKQWQLL). Over residues 442-453 (QGINTGRSSNDS) the composition is skewed to polar residues. 2 disordered regions span residues 442 to 562 (QGIN…SPDS) and 691 to 722 (RRSKKKEKQPWNHRAVGPREEHSRHPHHYHQG). Composition is skewed to basic and acidic residues over residues 465-536 (HPRE…DPKV) and 546-559 (SGERQKHSWGKDNS). A Nuclear localization signal motif is present at residues 482–502 (QKAEHWKLKKEESGQDRKKSW). A Phosphoserine modification is found at Ser559. The Nuclear localization signal motif lies at 686–711 (DKALKRRSKKKEKQPWNHRAVGPREE).

As to quaternary structure, interacts with ESR1, PBX1, PBX2 and PBX3. Interacts with TEX11.

Its subcellular location is the cytoplasm. It is found in the cytoskeleton. The protein resides in the nucleus. In terms of biological role, regulator of pre-B-cell leukemia transcription factors (BPXs) function. Inhibits the binding of PBX1-HOX complex to DNA and blocks the transcriptional activity of E2A-PBX1. Tethers estrogen receptor-alpha (ESR1) to microtubules and allows them to influence estrogen receptors-alpha signaling. This Rattus norvegicus (Rat) protein is Pre-B-cell leukemia transcription factor-interacting protein 1 (Pbxip1).